A 1429-amino-acid chain; its full sequence is uncharacterized protein (1429 aa).

2 disordered regions span residues M1–E76 and P103–K130. Low complexity predominate over residues S14–V29. Residues S109–E121 show a composition bias toward polar residues. Helical transmembrane passes span L197–I217 and F225–S245. One can recognise an SMP-LTD domain in the interval D266 to S471. C2 domains are found at residues W462 to Y584 and T738 to A858. The disordered stretch occupies residues N899–S932. Positions T1060–I1177 constitute a C2 3 domain. Residues E1280–A1303 are disordered. Positions A1294–A1303 are enriched in low complexity.

The protein localises to the membrane. This is an uncharacterized protein from Schizosaccharomyces pombe (strain 972 / ATCC 24843) (Fission yeast).